Reading from the N-terminus, the 360-residue chain is GTP 3',8-cyclase 2 (360 aa).

The Radical SAM core domain occupies 33 to 259 (TFGRVANDLR…PDPAPRGSAP (227 aa)). Arginine 42 contacts GTP. Positions 49 and 53 each coordinate [4Fe-4S] cluster. Residue tyrosine 55 coordinates S-adenosyl-L-methionine. Position 56 (cysteine 56) interacts with [4Fe-4S] cluster. Arginine 93 contacts GTP. S-adenosyl-L-methionine is bound at residue glycine 97. Threonine 124 contacts GTP. Serine 148 is an S-adenosyl-L-methionine binding site. A GTP-binding site is contributed by lysine 185. Methionine 219 contacts S-adenosyl-L-methionine. Residues cysteine 287 and cysteine 290 each contribute to the [4Fe-4S] cluster site. GTP is bound at residue 292–294 (RTR). Cysteine 304 contacts [4Fe-4S] cluster.

The protein belongs to the radical SAM superfamily. MoaA family. Monomer and homodimer. [4Fe-4S] cluster is required as a cofactor.

It catalyses the reaction GTP + AH2 + S-adenosyl-L-methionine = (8S)-3',8-cyclo-7,8-dihydroguanosine 5'-triphosphate + 5'-deoxyadenosine + L-methionine + A + H(+). Its pathway is cofactor biosynthesis; molybdopterin biosynthesis. Its function is as follows. Catalyzes the cyclization of GTP to (8S)-3',8-cyclo-7,8-dihydroguanosine 5'-triphosphate. This chain is GTP 3',8-cyclase 2, found in Mycobacterium bovis (strain ATCC BAA-935 / AF2122/97).